Reading from the N-terminus, the 455-residue chain is Bifunctional protein GlmU (455 aa).

Positions 1–226 are pyrophosphorylase; the sequence is MIAVAILAAG…YQEILGINDR (226 aa). UDP-N-acetyl-alpha-D-glucosamine is bound by residues 7 to 10, K21, Q73, and 78 to 79; these read LAAG and GT. D103 contributes to the Mg(2+) binding site. UDP-N-acetyl-alpha-D-glucosamine contacts are provided by G140, E155, N170, and N224. Residue N224 coordinates Mg(2+). The linker stretch occupies residues 227–247; that stretch reads KQLATAYKILQDRIKDDWLVA. The interval 248–455 is N-acetyltransferase; that stretch reads GVTIMDPDSI…RPISSKQTEK (208 aa). UDP-N-acetyl-alpha-D-glucosamine contacts are provided by R329 and K347. H359 (proton acceptor) is an active-site residue. Residues Y362 and N373 each contribute to the UDP-N-acetyl-alpha-D-glucosamine site. Residues A376, 382–383, A419, and R436 each bind acetyl-CoA; that span reads NY.

It in the N-terminal section; belongs to the N-acetylglucosamine-1-phosphate uridyltransferase family. In the C-terminal section; belongs to the transferase hexapeptide repeat family. In terms of assembly, homotrimer. Mg(2+) serves as cofactor.

It localises to the cytoplasm. The enzyme catalyses alpha-D-glucosamine 1-phosphate + acetyl-CoA = N-acetyl-alpha-D-glucosamine 1-phosphate + CoA + H(+). It catalyses the reaction N-acetyl-alpha-D-glucosamine 1-phosphate + UTP + H(+) = UDP-N-acetyl-alpha-D-glucosamine + diphosphate. The protein operates within nucleotide-sugar biosynthesis; UDP-N-acetyl-alpha-D-glucosamine biosynthesis; N-acetyl-alpha-D-glucosamine 1-phosphate from alpha-D-glucosamine 6-phosphate (route II): step 2/2. It participates in nucleotide-sugar biosynthesis; UDP-N-acetyl-alpha-D-glucosamine biosynthesis; UDP-N-acetyl-alpha-D-glucosamine from N-acetyl-alpha-D-glucosamine 1-phosphate: step 1/1. Its pathway is bacterial outer membrane biogenesis; LPS lipid A biosynthesis. Functionally, catalyzes the last two sequential reactions in the de novo biosynthetic pathway for UDP-N-acetylglucosamine (UDP-GlcNAc). The C-terminal domain catalyzes the transfer of acetyl group from acetyl coenzyme A to glucosamine-1-phosphate (GlcN-1-P) to produce N-acetylglucosamine-1-phosphate (GlcNAc-1-P), which is converted into UDP-GlcNAc by the transfer of uridine 5-monophosphate (from uridine 5-triphosphate), a reaction catalyzed by the N-terminal domain. This Acaryochloris marina (strain MBIC 11017) protein is Bifunctional protein GlmU.